The following is a 715-amino-acid chain: ATP-binding cassette sub-family B member 10, mitochondrial (715 aa).

Residues 1–82 (MRAPSARALL…SSGARRCWVL (82 aa)) constitute a mitochondrion transit peptide. Over 83–133 (AGPRAAHPLFARLQGAAATGVRDLGNDSQRRPAATGRSEVWKLLGLVRPER) the chain is Mitochondrial matrix. The helical transmembrane segment at 134 to 157 (GRLSAAVGFLAVSSVITMSAPFFL) threads the bilayer. Residues 136 to 422 (LSAAVGFLAV…LSSFYSELMK (287 aa)) form the ABC transmembrane type-1 domain. At 158–178 (GRIIDVIYTNPSEGYGDSLTR) the chain is on the mitochondrial intermembrane side. Residues 179–201 (LCAVLTCVFLCGAAANGIRVYLM) traverse the membrane as a helical segment. Topologically, residues 202–252 (QSSGQSIVNRLRTSLFSSILRQEVAFFDKTRTGELINRLSSDTALLGRSVT) are mitochondrial matrix. Position 230 is an N6-acetyllysine (Lys230). The helical transmembrane segment at 253 to 275 (ENLSDGLRAGAQASVGVGMMFFV) threads the bilayer. At 276-278 (SPS) the chain is on the mitochondrial intermembrane side. Residues 279–298 (LATFVLSVVPPISVLAVIYG) form a helical membrane-spanning segment. Residues 299–357 (RYLRKLSKATQDSLAEATQLAEERIGNIRTIRAFGKEMTEVEKYTGRVDQLLQLAQKEA) are Mitochondrial matrix-facing. Residues 358–381 (LARAGFFGAAGLSGNLIVLSVLYK) traverse the membrane as a helical segment. Residues 382 to 395 (GGLLMGSAHMTVGE) lie on the Mitochondrial intermembrane side of the membrane. Residues 396–417 (LSSFLMYAFWVGLSIGGLSSFY) form a helical membrane-spanning segment. The Mitochondrial matrix portion of the chain corresponds to 418-715 (SELMKGLGAG…AEQFLEPARA (298 aa)). The ABC transporter domain maps to 457–696 (LEFRNVHFTY…PNGLYRKLMN (240 aa)). Residues Gly495, Gly497, Lys498, Ser499, and Thr500 each contribute to the ATP site. Residue Ser499 coordinates Mg(2+). Cys547 is subject to S-glutathionyl cysteine. A Mg(2+)-binding site is contributed by Asp623.

It belongs to the ABC transporter superfamily. ABCB family. Mitochondrial peptide exporter (TC 3.A.1.212) subfamily. Homodimer or homooligomer. Interacts with PAAT; this interaction regulates ABCB10. Interacts with SLC25A37; this interaction stabilizes SLC25A37 and enhances the function of SLC25A37 to import mitochondrial iron during erythroid differentiation. Interacts with FECH; this interaction may allow the formation of the oligomeric complex with SLC25A37. Forms a complex with ABCB7 and FECH, where a dimeric FECH bridges ABCB7 and ABCB10 homodimers; this complex may be required for cellular iron homeostasis, mitochondrial function and heme biosynthesis. As to expression, expressed at particularly high levels in fetal liver, and erythroid tissues of embryos and adults. Found also in adult bone marrow, liver and kidney, and at lower levels in heart, brain and spleen.

It localises to the mitochondrion inner membrane. It catalyses the reaction biliverdin IXalpha(in) + ATP + H2O = biliverdin IXalpha(out) + ADP + phosphate + H(+). Its activity is regulated as follows. Oxidized glutathione (GSSG) stimulates ATP hydrolysis without affecting ATP binding, whereas reduced glutathione (GSH) inhibits ATP binding and hydrolysis. Functionally, ATP-dependent transporter located in the mitochondrial inner membrane that catalyzes the export of biliverdin from the mitochondrial matrix, and plays a crucial role in hemoglobin synthesis and antioxidative stress. Participates in the early step of the heme biosynthetic process during insertion of iron into protoporphyrin IX (PPIX). Involved in the stabilization of the iron transporter mitoferrin-1/SLC25A37. In addition may be involved in mitochondrial unfolded protein response (UPRmt) signaling pathway, although ABCB10 probably does not participate in peptide export from mitochondria. The sequence is that of ATP-binding cassette sub-family B member 10, mitochondrial from Mus musculus (Mouse).